A 363-amino-acid chain; its full sequence is Probable endopolygalacturonase B (363 aa).

The N-terminal stretch at 1–20 is a signal peptide; sequence MQLLQSSVIAATVGAALVAA. Residues 21–28 constitute a propeptide that is removed on maturation; it reads VPVELEAR. A disulfide bridge connects residues Cys-31 and Cys-46. 6 PbH1 repeats span residues 158 to 187, 188 to 209, 210 to 230, 239 to 260, 268 to 290, and 302 to 347; these read SDNL…DVGS, STYI…AINS, GSHI…SIGS, VEDV…RIKT, VSNV…IVEQ, and TNGI…SITG. The N-linked (GlcNAc...) asparagine glycan is linked to Asn-162. Asp-202 (proton donor) is an active-site residue. A disulfide bond links Cys-204 and Cys-220. Residue His-224 is part of the active site. 2 cysteine pairs are disulfide-bonded: Cys-330-Cys-335 and Cys-354-Cys-363.

Belongs to the glycosyl hydrolase 28 family.

It localises to the secreted. The enzyme catalyses (1,4-alpha-D-galacturonosyl)n+m + H2O = (1,4-alpha-D-galacturonosyl)n + (1,4-alpha-D-galacturonosyl)m.. Functionally, involved in maceration and soft-rotting of plant tissue. Hydrolyzes the 1,4-alpha glycosidic bonds of de-esterified pectate in the smooth region of the plant cell wall. This Aspergillus flavus (strain ATCC 200026 / FGSC A1120 / IAM 13836 / NRRL 3357 / JCM 12722 / SRRC 167) protein is Probable endopolygalacturonase B (pgaB).